Reading from the N-terminus, the 987-residue chain is Mediator of RNA polymerase II transcription subunit 24 (987 aa).

6 consecutive short sequence motifs (LXXLL motif) follow at residues 128 to 132 (LHWLL), 344 to 348 (LTPLL), 446 to 450 (LDLLL), 555 to 559 (LVALL), 786 to 790 (LPGLL), and 855 to 859 (LMRLL). A phosphoserine mark is found at Ser860 and Ser871.

The protein belongs to the Mediator complex subunit 24 family. In terms of assembly, component of the Mediator complex, which is composed of MED1, MED4, MED6, MED7, MED8, MED9, MED10, MED11, MED12, MED13, MED13L, MED14, MED15, MED16, MED17, MED18, MED19, MED20, MED21, MED22, MED23, MED24, MED25, MED26, MED27, MED29, MED30, MED31, CCNC, CDK8 and CDC2L6/CDK11. The MED12, MED13, CCNC and CDK8 subunits form a distinct module termed the CDK8 module. Mediator containing the CDK8 module is less active than Mediator lacking this module in supporting transcriptional activation. Individual preparations of the Mediator complex lacking one or more distinct subunits have been variously termed ARC, CRSP, DRIP, PC2, SMCC and TRAP. Interacts with AR. Interacts with MED1 and MED10. As to expression, expressed in the adrenal gland, brain, epididymis, heart, kidney, liver, ovary, pancreas, prostate, skeletal muscle, small intestine, spleen, stomach, testis and thymus.

It is found in the nucleus. In terms of biological role, component of the Mediator complex, a coactivator involved in the regulated transcription of nearly all RNA polymerase II-dependent genes. Mediator functions as a bridge to convey information from gene-specific regulatory proteins to the basal RNA polymerase II transcription machinery. Mediator is recruited to promoters by direct interactions with regulatory proteins and serves as a scaffold for the assembly of a functional preinitiation complex with RNA polymerase II and the general transcription factors. Required for basal and activator-dependent transcription. This Mus musculus (Mouse) protein is Mediator of RNA polymerase II transcription subunit 24 (Med24).